The primary structure comprises 596 residues: ATP-dependent RNA helicase dbp3 (596 aa).

Over residues 1-17 (MPKRTLEDTELNPRDNY) the composition is skewed to basic and acidic residues. Disordered stretches follow at residues 1–87 (MPKR…ESTS) and 115–139 (EEKVDIPESTDSATPISVAPQQNGT). The span at 21-30 (SSKKSRKEKR) shows a compositional bias: basic residues. A coiled-coil region spans residues 47 to 120 (IDIEVESKEA…KEGKEEKVDI (74 aa)). Residues 123–139 (STDSATPISVAPQQNGT) are compositionally biased toward polar residues. The short motif at 180 to 207 (IKFDYLPITDSAQRAPFKDFKAPTPIQA) is the Q motif element. The Helicase ATP-binding domain maps to 210–386 (WPFLLAGRDV…STFMTSPVKI (177 aa)). Position 223–230 (223–230 (AETGSGKT)) interacts with ATP. The DEAD box motif lies at 332-335 (DEAD). A Helicase C-terminal domain is found at 417-566 (RLMQLLKQYQ…PVPDELLKFG (150 aa)).

This sequence belongs to the DEAD box helicase family. DDX5/DBP2 subfamily.

It is found in the nucleus. The protein resides in the nucleolus. The enzyme catalyses ATP + H2O = ADP + phosphate + H(+). Its function is as follows. ATP-dependent RNA helicase required for 60S ribosomal subunit synthesis. Involved in efficient pre-rRNA processing, predominantly at site A3, which is necessary for the normal formation of 25S and 5.8S rRNAs. The polypeptide is ATP-dependent RNA helicase dbp3 (dbp3) (Sclerotinia sclerotiorum (strain ATCC 18683 / 1980 / Ss-1) (White mold)).